Reading from the N-terminus, the 466-residue chain is 3-isopropylmalate dehydratase large subunit (466 aa).

[4Fe-4S] cluster-binding residues include cysteine 347, cysteine 407, and cysteine 410.

The protein belongs to the aconitase/IPM isomerase family. LeuC type 1 subfamily. As to quaternary structure, heterodimer of LeuC and LeuD. The cofactor is [4Fe-4S] cluster.

The catalysed reaction is (2R,3S)-3-isopropylmalate = (2S)-2-isopropylmalate. Its pathway is amino-acid biosynthesis; L-leucine biosynthesis; L-leucine from 3-methyl-2-oxobutanoate: step 2/4. Its function is as follows. Catalyzes the isomerization between 2-isopropylmalate and 3-isopropylmalate, via the formation of 2-isopropylmaleate. In Shigella boydii serotype 4 (strain Sb227), this protein is 3-isopropylmalate dehydratase large subunit.